The following is a 641-amino-acid chain: ATP-dependent DNA helicase PIF1 (641 aa).

The tract at residues 1–180 is PINT; the sequence is MLSGIEAAAG…LVKRPVEPQA (180 aa). Phosphoserine is present on residues S27 and S151. Positions 167–641 are hydrolyzes ATP in the presence of both magnesium and single-stranded DNA; weak activity in the presence of RNA or double-stranded DNA; No unwinding activity; that stretch reads PDTTLVKRPV…SDQENMDPIL (475 aa). The disordered stretch occupies residues 173–192; that stretch reads KRPVEPQAGAEPSTEAPRWP. 228 to 235 lines the ATP pocket; the sequence is GSAGTGKS. The DNA-binding element occupies 577–596; it reads QAYVALSRARSLQGLRVLDF. The tract at residues 622-641 is disordered; that stretch reads LESPDDDEAASDQENMDPIL. Residues 624–641 show a composition bias toward acidic residues; it reads SPDDDEAASDQENMDPIL.

It belongs to the helicase family. PIF1 subfamily. Monomer. Interacts with telomerase. It depends on Mg(2+) as a cofactor. As to expression, weak ubiquitous expression.

Its subcellular location is the nucleus. It localises to the mitochondrion. The catalysed reaction is Couples ATP hydrolysis with the unwinding of duplex DNA at the replication fork by translocating in the 5'-3' direction. This creates two antiparallel DNA single strands (ssDNA). The leading ssDNA polymer is the template for DNA polymerase III holoenzyme which synthesizes a continuous strand.. The enzyme catalyses ATP + H2O = ADP + phosphate + H(+). DNA-dependent ATPase and 5'-3' DNA helicase required for the maintenance of both mitochondrial and nuclear genome stability. Efficiently unwinds G-quadruplex (G4) DNA structures and forked RNA-DNA hybrids. Resolves G4 structures, preventing replication pausing and double-strand breaks (DSBs) at G4 motifs. Involved in the maintenance of telomeric DNA. Inhibits telomere elongation, de novo telomere formation and telomere addition to DSBs via catalytic inhibition of telomerase. Reduces the processivity of telomerase by displacing active telomerase from DNA ends. Releases telomerase by unwinding the short telomerase RNA/telomeric DNA hybrid that is the intermediate in the telomerase reaction. Possesses an intrinsic strand annealing activity. This Homo sapiens (Human) protein is ATP-dependent DNA helicase PIF1.